The primary structure comprises 147 residues: UPF0208 membrane protein PM0703 (147 aa).

The next 2 membrane-spanning stretches (helical) occupy residues 32 to 52 and 65 to 85; these read VIKATLFAQKFMPFLAVFAIT and LAIAVFSAIVALLIPLQGLYW.

Belongs to the UPF0208 family.

It localises to the cell inner membrane. In Pasteurella multocida (strain Pm70), this protein is UPF0208 membrane protein PM0703.